Reading from the N-terminus, the 132-residue chain is Phosphoribosyl-ATP pyrophosphatase (132 aa).

It belongs to the PRA-PH family.

It localises to the cytoplasm. It catalyses the reaction 1-(5-phospho-beta-D-ribosyl)-ATP + H2O = 1-(5-phospho-beta-D-ribosyl)-5'-AMP + diphosphate + H(+). It participates in amino-acid biosynthesis; L-histidine biosynthesis; L-histidine from 5-phospho-alpha-D-ribose 1-diphosphate: step 2/9. This Acidovorax sp. (strain JS42) protein is Phosphoribosyl-ATP pyrophosphatase.